We begin with the raw amino-acid sequence, 344 residues long: Axoneme-associated protein mst101(1) (344 aa).

Repeat copies occupy residues 74–89, 90–105, 106–121, 122–137, 138–153, 154–169, 170–185, 186–201, 202–217, 218–233, 234–249, and 250–265. Residues 74 to 344 form a 17 X 16 AA approximate tandem repeats of K-K-K-C-X-E-X-A-[KQ]-K-X-X-E-X-A-X region; that stretch reads KKKCAEAAKK…AAQKKCEPKK (271 aa). A disordered region spans residues 206 to 244; it reads KEAAEKKKCEERAKKEKEAAEKKKCEERAKKEKEAAEKK. One copy of the 13; approximate repeat lies at 266–281; that stretch reads AQKKKCAELAKKAKEA. The stretch at 282-297 is one 14; approximate repeat; sequence AEKKKCAKKAGEKGSK. Residues 285–315 are compositionally biased toward basic and acidic residues; it reads KKCAKKAGEKGSKQSGSDKGKKNGKKNDMKN. The disordered stretch occupies residues 285–318; that stretch reads KKCAKKAGEKGSKQSGSDKGKKNGKKNDMKNKCA. A 15; approximate repeat occupies 298–313; that stretch reads QSGSDKGKKNGKKNDM. Residues 314 to 329 form repeat 16; sequence KNKCAMLAKKAKEEAL. One copy of the 17; truncated repeat lies at 330 to 344; the sequence is KKKCAAAQKKCEPKK.

Testis. Located in spermatocytes and spermatid bundles.

Its subcellular location is the cytoplasm. In terms of biological role, possible structural role in the sperm tail. It is associated with axonemal structures. This chain is Axoneme-associated protein mst101(1) (mst101(1)), found in Drosophila hydei (Fruit fly).